The sequence spans 299 residues: ATP phosphoribosyltransferase (299 aa).

The protein belongs to the ATP phosphoribosyltransferase family. Long subfamily. It depends on Mg(2+) as a cofactor.

The protein resides in the cytoplasm. It catalyses the reaction 1-(5-phospho-beta-D-ribosyl)-ATP + diphosphate = 5-phospho-alpha-D-ribose 1-diphosphate + ATP. It participates in amino-acid biosynthesis; L-histidine biosynthesis; L-histidine from 5-phospho-alpha-D-ribose 1-diphosphate: step 1/9. With respect to regulation, feedback inhibited by histidine. Its function is as follows. Catalyzes the condensation of ATP and 5-phosphoribose 1-diphosphate to form N'-(5'-phosphoribosyl)-ATP (PR-ATP). Has a crucial role in the pathway because the rate of histidine biosynthesis seems to be controlled primarily by regulation of HisG enzymatic activity. The polypeptide is ATP phosphoribosyltransferase (Shewanella denitrificans (strain OS217 / ATCC BAA-1090 / DSM 15013)).